A 365-amino-acid chain; its full sequence is Probable dual-specificity RNA methyltransferase RlmN (365 aa).

Glu-111 acts as the Proton acceptor in catalysis. The Radical SAM core domain occupies 117–351; that stretch reads ADDRMTACIS…VNIRRSRGKD (235 aa). Cys-124 and Cys-356 are oxidised to a cystine. [4Fe-4S] cluster-binding residues include Cys-131, Cys-135, and Cys-138. Residues 182-183, Ser-214, 237-239, and Asn-313 each bind S-adenosyl-L-methionine; these read GE and SLH. The S-methylcysteine intermediate role is filled by Cys-356.

Belongs to the radical SAM superfamily. RlmN family. It depends on [4Fe-4S] cluster as a cofactor.

It localises to the cytoplasm. It carries out the reaction adenosine(2503) in 23S rRNA + 2 reduced [2Fe-2S]-[ferredoxin] + 2 S-adenosyl-L-methionine = 2-methyladenosine(2503) in 23S rRNA + 5'-deoxyadenosine + L-methionine + 2 oxidized [2Fe-2S]-[ferredoxin] + S-adenosyl-L-homocysteine. The catalysed reaction is adenosine(37) in tRNA + 2 reduced [2Fe-2S]-[ferredoxin] + 2 S-adenosyl-L-methionine = 2-methyladenosine(37) in tRNA + 5'-deoxyadenosine + L-methionine + 2 oxidized [2Fe-2S]-[ferredoxin] + S-adenosyl-L-homocysteine. Specifically methylates position 2 of adenine 2503 in 23S rRNA and position 2 of adenine 37 in tRNAs. This chain is Probable dual-specificity RNA methyltransferase RlmN, found in Cytophaga hutchinsonii (strain ATCC 33406 / DSM 1761 / CIP 103989 / NBRC 15051 / NCIMB 9469 / D465).